A 505-amino-acid polypeptide reads, in one-letter code: Deoxyguanosinetriphosphate triphosphohydrolase (505 aa).

Residues 66-273 (RLTHSMEVQQ…MEAADDISYC (208 aa)) enclose the HD domain.

The protein belongs to the dGTPase family. Type 1 subfamily. As to quaternary structure, homotetramer. Mg(2+) serves as cofactor.

It catalyses the reaction dGTP + H2O = 2'-deoxyguanosine + triphosphate + H(+). Functionally, dGTPase preferentially hydrolyzes dGTP over the other canonical NTPs. The polypeptide is Deoxyguanosinetriphosphate triphosphohydrolase (Escherichia coli O157:H7).